The sequence spans 89 residues: Large ribosomal subunit protein bL27 (89 aa).

It belongs to the bacterial ribosomal protein bL27 family.

The polypeptide is Large ribosomal subunit protein bL27 (Synechococcus sp. (strain JA-3-3Ab) (Cyanobacteria bacterium Yellowstone A-Prime)).